A 277-amino-acid polypeptide reads, in one-letter code: Transport and Golgi organization protein 11 (277 aa).

The Cytoplasmic portion of the chain corresponds to 1 to 256; that stretch reads MVTPQSPTPM…NNEQRTQREK (256 aa). Disordered regions lie at residues 124 to 148 and 167 to 200; these read HFPS…NDLD and VARM…LNQQ. Phosphoserine is present on residues Ser-127, Ser-129, Ser-132, and Ser-133. The span at 174–200 shows a compositional bias: polar residues; that stretch reads GNDTNSVESDSQLTTGSASKRSQLNQQ. Residue Thr-177 is modified to Phosphothreonine. Phosphoserine occurs at positions 179, 182, and 190. Residues Thr-216 and Thr-222 each carry the phosphothreonine modification. Residues 225-253 adopt a coiled-coil conformation; the sequence is EEILYLRRQLAKLNRRVLNIEINNEQRTQ. Residues 257–274 form a helical; Anchor for type IV membrane protein membrane-spanning segment; that stretch reads IVYCLGLAYFVLKTIFWL. Over 275-277 the chain is Lumenal; it reads NRN.

It belongs to the Tango11 family.

The protein localises to the endoplasmic reticulum membrane. It localises to the mitochondrion outer membrane. The protein resides in the peroxisome. Its function is as follows. May play a role in mitochondrial and peroxisomal fission. This Drosophila melanogaster (Fruit fly) protein is Transport and Golgi organization protein 11 (Tango11).